We begin with the raw amino-acid sequence, 441 residues long: BTB/POZ domain-containing protein At3g05675 (441 aa).

Positions S20–E98 constitute a BTB domain.

The protein operates within protein modification; protein ubiquitination. In terms of biological role, may act as a substrate-specific adapter of an E3 ubiquitin-protein ligase complex (CUL3-RBX1-BTB) which mediates the ubiquitination and subsequent proteasomal degradation of target proteins. The protein is BTB/POZ domain-containing protein At3g05675 of Arabidopsis thaliana (Mouse-ear cress).